Reading from the N-terminus, the 645-residue chain is UPF0313 protein CLK_3381 (645 aa).

The Radical SAM core domain occupies 295-566 (AIKEVKFSIT…RMQRALLQFS (272 aa)). 3 residues coordinate [4Fe-4S] cluster: Cys-309, Cys-313, and Cys-316. The interval 598 to 645 (NKPYKKSHKKNNVKNNNNHYNKNNNYNKNKDVSKKNKKNSLSKHKKRK) is disordered. Over residues 600 to 609 (PYKKSHKKNN) the composition is skewed to basic residues. The span at 610 to 624 (VKNNNNHYNKNNNYN) shows a compositional bias: low complexity. The segment covering 632-645 (KNKKNSLSKHKKRK) has biased composition (basic residues).

It belongs to the UPF0313 family. The cofactor is [4Fe-4S] cluster.

This chain is UPF0313 protein CLK_3381, found in Clostridium botulinum (strain Loch Maree / Type A3).